The following is a 269-amino-acid chain: Undecaprenyl-diphosphatase (269 aa).

8 helical membrane-spanning segments follow: residues 1–21 (MSIFQAIILGAVQGLAEFLPI), 39–59 (LPILFDILLHVATLAAVCTVF), 86–106 (LMMIAAIIVATAVTGVIGLLL), 112–132 (TIDIRLIPIFFIITGLLLIAS), 144–164 (VTLLTAAITGLAQGIGVIPGI), 184–204 (AGEFSFLLSIPAILAAFILEI), 210–230 (LLAGVSPISLISGMISAFVVG), and 249–269 (FAFYLIPLGLGLSIYFWGFAG).

Belongs to the UppP family.

It is found in the cell inner membrane. The catalysed reaction is di-trans,octa-cis-undecaprenyl diphosphate + H2O = di-trans,octa-cis-undecaprenyl phosphate + phosphate + H(+). Its function is as follows. Catalyzes the dephosphorylation of undecaprenyl diphosphate (UPP). Confers resistance to bacitracin. The chain is Undecaprenyl-diphosphatase from Treponema denticola (strain ATCC 35405 / DSM 14222 / CIP 103919 / JCM 8153 / KCTC 15104).